The sequence spans 466 residues: Integrator complex subunit 12 (466 aa).

Positions 41–101 are disordered; the sequence is KGNDSVYRPQ…EAEKRSADKM (61 aa). The span at 69–84 shows a compositional bias: low complexity; sequence KASSSTPSSSMLSKPL. Positions 85-101 are enriched in basic and acidic residues; that stretch reads TSEKLKKEAEKRSADKM. The PHD-type zinc finger occupies 156–212; sequence GLACVVCRQMTVFSGNQLVECQECHNLYHQDCHKPQVTDKDVNDPRLVWYCARCTRQ. 2 disordered regions span residues 216–251 and 311–466; these read MAQK…ELKA and GTSS…KLKK. Composition is skewed to polar residues over residues 218 to 233 and 311 to 329; these read QKNQ…SAVS and GTSS…SVQK. The span at 338–373 shows a compositional bias: low complexity; sequence PSKPGSVSKSGSGGSSSSSTIPIKPLPPLILGKTGL. Positions 374–386 are enriched in polar residues; it reads SRSMSSDNVSKTG. The span at 392 to 423 shows a compositional bias: low complexity; it reads PSSAGSVSSLSSQLGSNNGSSSAAGSNVTSSN. Residues 453–466 are compositionally biased toward basic residues; that stretch reads QMVKKKAAQKKLKK.

It belongs to the Integrator subunit 12 family. In terms of assembly, component of the Integrator complex, composed of core subunits INTS1, INTS2, INTS3, INTS4, INTS5, INTS6, INTS7, INTS8, INTS9/RC74, INTS10, INTS11/CPSF3L, INTS12, INTS13, INTS14 and INTS15. The core complex associates with protein phosphatase 2A subunits PPP2CA and PPP2R1A, to form the Integrator-PP2A (INTAC) complex.

The protein localises to the nucleus. Component of the integrator complex, a multiprotein complex that terminates RNA polymerase II (Pol II) transcription in the promoter-proximal region of genes. The integrator complex provides a quality checkpoint during transcription elongation by driving premature transcription termination of transcripts that are unfavorably configured for transcriptional elongation: the complex terminates transcription by (1) catalyzing dephosphorylation of the C-terminal domain (CTD) of Pol II subunit POLR2A/RPB1 and SUPT5H/SPT5, (2) degrading the exiting nascent RNA transcript via endonuclease activity and (3) promoting the release of Pol II from bound DNA. The integrator complex is also involved in terminating the synthesis of non-coding Pol II transcripts, such as enhancer RNAs (eRNAs), small nuclear RNAs (snRNAs), telomerase RNAs and long non-coding RNAs (lncRNAs). The polypeptide is Integrator complex subunit 12 (ints12) (Xenopus tropicalis (Western clawed frog)).